Consider the following 461-residue polypeptide: Phytase PHO112 (461 aa).

Disulfide bonds link Cys62–Cys384, Cys261–Cys274, and Cys404–Cys412. 1D-myo-inositol hexakisphosphate contacts are provided by Arg72, His73, Arg76, and Ser79. The active-site Nucleophile is His73. Residues Asn97 and Asn157 are each glycosylated (N-linked (GlcNAc...) asparagine). Arg169 contacts 1D-myo-inositol hexakisphosphate. 2 N-linked (GlcNAc...) asparagine glycosylation sites follow: Asn229 and Asn248. Lys293 contacts 1D-myo-inositol hexakisphosphate. Residues Asn302 and Asn313 are each glycosylated (N-linked (GlcNAc...) asparagine). His334 and Asp335 together coordinate 1D-myo-inositol hexakisphosphate. N-linked (GlcNAc...) asparagine glycans are attached at residues Asn437 and Asn452.

It belongs to the histidine acid phosphatase family. Monomer.

The protein resides in the secreted. The enzyme catalyses 1D-myo-inositol hexakisphosphate + H2O = 1D-myo-inositol 1,2,4,5,6-pentakisphosphate + phosphate. It catalyses the reaction 1D-myo-inositol 1,2,4,5,6-pentakisphosphate + H2O = 1D-myo-inositol 1,2,5,6-tetrakisphosphate + phosphate. The catalysed reaction is 1D-myo-inositol 1,2,5,6-tetrakisphosphate + H2O = 1D-myo-inositol 1,2,6-trisphosphate + phosphate. It carries out the reaction 1D-myo-inositol 1,2,6-trisphosphate + H2O = 1D-myo-inositol 1,2-bisphosphate + phosphate. The enzyme catalyses 1D-myo-inositol 1,2-bisphosphate + H2O = 1D-myo-inositol 2-phosphate + phosphate. Its function is as follows. Catalyzes the phosphate monoester hydrolysis of phytic acid (myo-inositol hexakisphosphate), which results in the stepwise formation of myo-inositol pentakis-, tetrakis-, tris-, bis-, and monophosphates, as well as the liberation of inorganic phosphate. Myo-inositol 2-monophosphate is the end product. Responsible of about 25% of the phytase activity. The residual phytase activity might be contributed by other cytosolic or cellular enzymes such as acid phosphatase that also degraded the substrate phytate. Is essential for human tissue damage during infection. This is Phytase PHO112 (PHO112) from Candida albicans (strain SC5314 / ATCC MYA-2876) (Yeast).